The sequence spans 109 residues: Latartoxin-2a (109 aa).

Residues 1-19 (MKVLVIIALCLVAFQSALS) form the signal peptide. A propeptide spans 20–37 (KKIENFESYIEDLKSEAR) (removed in mature form). Residues 34–37 (SEAR) carry the Processing quadruplet motif motif. 5 disulfide bridges follow: Cys-39/Cys-56, Cys-46/Cys-67, Cys-55/Cys-81, Cys-69/Cys-79, and Cys-72/Cys-93. At Val-108 the chain carries Valine amide.

The protein belongs to the neurotoxin 19 (CSTX) family. 11 (latartoxin) subfamily. Post-translationally, contains 5 disulfide bonds. Cleavage of the propeptide depends on the processing quadruplet motif (XXXR, with at least one of X being E). As to expression, expressed by the venom gland.

It localises to the secreted. Its function is as follows. Insect toxin. Causes paralysis in larvae of C.vicina by depolarizing membranes at the neuromuscular junction. The polypeptide is Latartoxin-2a (Lachesana tarabaevi (Spider)).